Consider the following 252-residue polypeptide: Thiamine thiazole synthase (252 aa).

Residues S35, 54–55, G62, V126, and 152–154 contribute to the NAD(+) site; these read EK and HVD. Positions 154 and 169 each coordinate Fe cation. M217 lines the NAD(+) pocket. R227 lines the glycine pocket.

This sequence belongs to the THI4 family. In terms of assembly, homooctamer; tetramer of dimers. Fe(2+) serves as cofactor.

The enzyme catalyses hydrogen sulfide + glycine + NAD(+) = ADP-5-ethyl-4-methylthiazole-2-carboxylate + nicotinamide + 3 H2O + H(+). It participates in cofactor biosynthesis; thiamine diphosphate biosynthesis. In terms of biological role, involved in the biosynthesis of the thiazole moiety of thiamine. Catalyzes the conversion of NAD and glycine to adenosine diphosphate 5-(2-hydroxyethyl)-4-methylthiazole-2-carboxylate (ADT), an adenylated thiazole intermediate, using free sulfide as a source of sulfur. This Pyrococcus horikoshii (strain ATCC 700860 / DSM 12428 / JCM 9974 / NBRC 100139 / OT-3) protein is Thiamine thiazole synthase.